Here is a 144-residue protein sequence, read N- to C-terminus: Phosphomevalonate dehydratase small subunit (144 aa).

Catalysis depends on Ser65, which acts as the Proton acceptor.

The protein belongs to the AcnX type II small subunit family. In terms of assembly, heterodimer composed of a large subunit (PMDh-L) and a small subunit (PMDh-S).

It carries out the reaction (R)-5-phosphomevalonate = (2E)-3-methyl-5-phosphooxypent-2-enoate + H2O. It functions in the pathway isoprenoid biosynthesis; isopentenyl diphosphate biosynthesis via mevalonate pathway. Functionally, component of a hydro-lyase that catalyzes the dehydration of mevalonate 5-phosphate (MVA5P) to form trans-anhydromevalonate 5-phosphate (tAHMP). Involved in the archaeal mevalonate (MVA) pathway, which provides fundamental precursors for isoprenoid biosynthesis, such as isopentenyl diphosphate (IPP) and dimethylallyl diphosphate (DMAPP). In Methanosarcina mazei (strain ATCC BAA-159 / DSM 3647 / Goe1 / Go1 / JCM 11833 / OCM 88) (Methanosarcina frisia), this protein is Phosphomevalonate dehydratase small subunit.